The sequence spans 896 residues: Trehalose-phosphatase (896 aa).

Positions 1-554 (MTTTAQDNSP…SNDDMERKMT (554 aa)) are glycosyltransferase.

It in the N-terminal section; belongs to the glycosyltransferase 20 family. The protein in the C-terminal section; belongs to the trehalose phosphatase family. As to quaternary structure, the trehalose synthase complex is composed of the two catalytic subunits TPS1 and TPS2, and at least one of the two regulatory subunits TPS3 or TSL1. Mg(2+) is required as a cofactor.

Its subcellular location is the cytoplasm. It catalyses the reaction alpha,alpha-trehalose 6-phosphate + H2O = alpha,alpha-trehalose + phosphate. It functions in the pathway carbohydrate biosynthesis. Its activity is regulated as follows. Inhibited by EDTA. Functionally, phosphatase catalytic subunit of the trehalose synthase complex that catalyzes the production of trehalose from glucose-6-phosphate and UDP-alpha-D-glucose in a two step process. The polypeptide is Trehalose-phosphatase (Saccharomyces cerevisiae (strain ATCC 204508 / S288c) (Baker's yeast)).